Consider the following 454-residue polypeptide: tRNA modification GTPase MnmE (454 aa).

(6S)-5-formyl-5,6,7,8-tetrahydrofolate is bound by residues arginine 23, glutamate 80, and lysine 120. The region spanning 216–377 (GMKVVIAGRP…LRNHLKQSMG (162 aa)) is the TrmE-type G domain. A K(+)-binding site is contributed by asparagine 226. Residues 226 to 231 (NAGKSS), 245 to 251 (TDIAGTT), 270 to 273 (DTAG), 335 to 338 (NKAD), and 358 to 360 (SAR) each bind GTP. Mg(2+) is bound at residue serine 230. 3 residues coordinate K(+): threonine 245, isoleucine 247, and threonine 250. Residue threonine 251 coordinates Mg(2+). Lysine 454 lines the (6S)-5-formyl-5,6,7,8-tetrahydrofolate pocket.

This sequence belongs to the TRAFAC class TrmE-Era-EngA-EngB-Septin-like GTPase superfamily. TrmE GTPase family. Homodimer. Heterotetramer of two MnmE and two MnmG subunits. K(+) serves as cofactor.

The protein localises to the cytoplasm. Functionally, exhibits a very high intrinsic GTPase hydrolysis rate. Involved in the addition of a carboxymethylaminomethyl (cmnm) group at the wobble position (U34) of certain tRNAs, forming tRNA-cmnm(5)s(2)U34. This is tRNA modification GTPase MnmE from Enterobacter sp. (strain 638).